The chain runs to 779 residues: Ribosome-releasing factor 2, mitochondrial (779 aa).

The tr-type G domain maps to 68-353 (AKIRNIGIMA…AVTTYLPSPE (286 aa)). GTP contacts are provided by residues 77–84 (AHIDAGKT), 141–145 (DTPGH), and 195–198 (NKMD).

The protein belongs to the TRAFAC class translation factor GTPase superfamily. Classic translation factor GTPase family. EF-G/EF-2 subfamily.

It is found in the mitochondrion. The catalysed reaction is GTP + H2O = GDP + phosphate + H(+). Functionally, mitochondrial GTPase that mediates the disassembly of ribosomes from messenger RNA at the termination of mitochondrial protein biosynthesis. Acts in collaboration with MRRF. GTP hydrolysis follows the ribosome disassembly and probably occurs on the ribosome large subunit. Not involved in the GTP-dependent ribosomal translocation step during translation elongation. The protein is Ribosome-releasing factor 2, mitochondrial (Gfm2) of Rattus norvegicus (Rat).